Here is a 1031-residue protein sequence, read N- to C-terminus: Translation initiation factor IF-2 (1031 aa).

Disordered regions lie at residues 33–369 (KSHS…GDVL) and 388–436 (LKPL…AESL). Residues 45-56 (ELVRSKLSEPRV) show a composition bias toward basic and acidic residues. A compositionally biased stretch (low complexity) spans 96–105 (PAPAQQQAAA). Residues 108-123 (ASSSKPSPQRPDQLSS) are compositionally biased toward polar residues. Over residues 148–171 (PAAQEPQPAAASTRPEAAAKAGSP) the composition is skewed to low complexity. The span at 184–200 (VLPPPRRAASGPEPPQR) shows a compositional bias: pro residues. Residues 250–281 (TRPEPRSPVAKKEESSDSGKADEAPRPQRRLE) show a composition bias toward basic and acidic residues. The segment covering 286-299 (PTRPVAKPLPPEPD) has biased composition (pro residues). Residues 419-435 (RPSASAEATAPEAAAES) show a composition bias toward low complexity. The region spanning 522 to 695 (PRPPVVTIMG…LLVADVAELQ (174 aa)) is the tr-type G domain. The tract at residues 531 to 538 (GHVDHGKT) is G1. 531-538 (GHVDHGKT) serves as a coordination point for GTP. The G2 stretch occupies residues 556–560 (GITQR). The tract at residues 581–584 (DTPG) is G3. GTP-binding positions include 581–585 (DTPGH) and 635–638 (NKID). The interval 635 to 638 (NKID) is G4. The interval 671–673 (SAL) is G5.

Belongs to the TRAFAC class translation factor GTPase superfamily. Classic translation factor GTPase family. IF-2 subfamily.

It is found in the cytoplasm. Its function is as follows. One of the essential components for the initiation of protein synthesis. Protects formylmethionyl-tRNA from spontaneous hydrolysis and promotes its binding to the 30S ribosomal subunits. Also involved in the hydrolysis of GTP during the formation of the 70S ribosomal complex. This chain is Translation initiation factor IF-2, found in Synechococcus sp. (strain JA-3-3Ab) (Cyanobacteria bacterium Yellowstone A-Prime).